Here is a 310-residue protein sequence, read N- to C-terminus: Ribonuclease Z (310 aa).

Zn(2+) contacts are provided by His60, His62, Asp64, His65, His140, Asp209, and His269. Asp64 acts as the Proton acceptor in catalysis.

This sequence belongs to the RNase Z family. Homodimer. Requires Zn(2+) as cofactor.

The catalysed reaction is Endonucleolytic cleavage of RNA, removing extra 3' nucleotides from tRNA precursor, generating 3' termini of tRNAs. A 3'-hydroxy group is left at the tRNA terminus and a 5'-phosphoryl group is left at the trailer molecule.. Functionally, zinc phosphodiesterase, which displays some tRNA 3'-processing endonuclease activity. Probably involved in tRNA maturation, by removing a 3'-trailer from precursor tRNA. This Methanococcus maripaludis (strain C7 / ATCC BAA-1331) protein is Ribonuclease Z.